We begin with the raw amino-acid sequence, 190 residues long: Glutamyl-tRNA(Gln) amidotransferase subunit F, mitochondrial (190 aa).

This sequence belongs to the GatF family. In terms of assembly, subunit of the heterotrimeric GatFAB amidotransferase (AdT) complex, composed of A, B and F subunits.

The protein localises to the mitochondrion inner membrane. The enzyme catalyses L-glutamyl-tRNA(Gln) + L-glutamine + ATP + H2O = L-glutaminyl-tRNA(Gln) + L-glutamate + ADP + phosphate + H(+). In terms of biological role, allows the formation of correctly charged Gln-tRNA(Gln) through the transamidation of misacylated Glu-tRNA(Gln) in the mitochondria. The reaction takes place in the presence of glutamine and ATP through an activated gamma-phospho-Glu-tRNA(Gln). Required for proper protein synthesis within the mitochondrion. This chain is Glutamyl-tRNA(Gln) amidotransferase subunit F, mitochondrial, found in Eremothecium gossypii (strain ATCC 10895 / CBS 109.51 / FGSC 9923 / NRRL Y-1056) (Yeast).